The following is a 242-amino-acid chain: Small ribosomal subunit protein uS2 (242 aa).

This sequence belongs to the universal ribosomal protein uS2 family.

The polypeptide is Small ribosomal subunit protein uS2 (Vibrio vulnificus (strain CMCP6)).